The following is a 1051-amino-acid chain: Ubiquitin-activating enzyme E1 2 (1051 aa).

Residues 1–32 (MLPRKREIVAGEVEDLQKKTRAGEGEATREEG) are compositionally biased toward basic and acidic residues. Positions 1 to 42 (MLPRKREIVAGEVEDLQKKTRAGEGEATREEGDAAMAGRGNE) are disordered. Tandem repeats lie at residues 56 to 194 (GRET…GSVF) and 453 to 605 (GSTL…QMVI). A 2 approximate repeats region spans residues 56-605 (GRETMKPLFG…GAKCNTQMVI (550 aa)). ATP-binding positions include alanine 472, aspartate 498, arginine 509, lysine 522, and 570-571 (DN). The active-site Glycyl thioester intermediate is the cysteine 626.

This sequence belongs to the ubiquitin-activating E1 family. As to quaternary structure, monomer.

The enzyme catalyses ATP + ubiquitin + [E1 ubiquitin-activating enzyme]-L-cysteine = AMP + diphosphate + S-ubiquitinyl-[E1 ubiquitin-activating enzyme]-L-cysteine.. Its pathway is protein modification; protein ubiquitination. Functionally, activates ubiquitin by first adenylating its C-terminal glycine residue with ATP, and thereafter linking this residue to the side chain of a cysteine residue in E1, yielding a ubiquitin-E1 thioester and free AMP. The polypeptide is Ubiquitin-activating enzyme E1 2 (UBA2) (Triticum aestivum (Wheat)).